The chain runs to 211 residues: MFALKFASLFILAYLLGSFPAGVVVGKIFFYKDIRKYGSGNIGTTNTFRVLGPVAGIIVFLIDFFKGTLATLIPVIFNLGPHYLCLIFGLVAILGHAFPIFLKFKGGKAVATSAGFLLGYNVHFFLICAVIFIPILFITSMVSLTSLISVVLIFIASFFFHDIALSIISGLLVILIYWSHRSNIARIEKHQENMVPFGVVYWLKNKHTKSK.

5 helical membrane-spanning segments follow: residues 6-26 (FASL…VVVG), 57-77 (IIVF…PVIF), 82-102 (HYLC…PIFL), 124-144 (FFLI…MVSL), and 148-168 (ISVV…LSII).

The protein belongs to the PlsY family. As to quaternary structure, probably interacts with PlsX.

The protein localises to the cell membrane. It catalyses the reaction an acyl phosphate + sn-glycerol 3-phosphate = a 1-acyl-sn-glycero-3-phosphate + phosphate. It participates in lipid metabolism; phospholipid metabolism. Catalyzes the transfer of an acyl group from acyl-phosphate (acyl-PO(4)) to glycerol-3-phosphate (G3P) to form lysophosphatidic acid (LPA). This enzyme utilizes acyl-phosphate as fatty acyl donor, but not acyl-CoA or acyl-ACP. This is Glycerol-3-phosphate acyltransferase 2 from Lactobacillus acidophilus (strain ATCC 700396 / NCK56 / N2 / NCFM).